The sequence spans 752 residues: Catalase-peroxidase (752 aa).

Residues Met1–Thr20 are disordered. The segment at residues Trp111 to Tyr234 is a cross-link (tryptophyl-tyrosyl-methioninium (Trp-Tyr) (with M-260)). His112 (proton acceptor) is an active-site residue. A cross-link (tryptophyl-tyrosyl-methioninium (Tyr-Met) (with W-111)) is located at residues Tyr234–Met260. A heme b-binding site is contributed by His275.

This sequence belongs to the peroxidase family. Peroxidase/catalase subfamily. Homodimer or homotetramer. Heme b is required as a cofactor. In terms of processing, formation of the three residue Trp-Tyr-Met cross-link is important for the catalase, but not the peroxidase activity of the enzyme.

The enzyme catalyses H2O2 + AH2 = A + 2 H2O. It carries out the reaction 2 H2O2 = O2 + 2 H2O. Functionally, bifunctional enzyme with both catalase and broad-spectrum peroxidase activity. The protein is Catalase-peroxidase of Koribacter versatilis (strain Ellin345).